The chain runs to 319 residues: Ribonucleoside-diphosphate reductase small chain (319 aa).

Fe cation-binding residues include D70, E101, and H104. The active site involves Y108. Fe cation-binding residues include E163, E197, and H200. The segment at F313 to F319 is interaction with R1.

The protein belongs to the ribonucleoside diphosphate reductase small chain family. In terms of assembly, interacts with RNR1/OPG080 subunit. Can interact with host RNR1 supunit. Fe cation serves as cofactor.

It catalyses the reaction a 2'-deoxyribonucleoside 5'-diphosphate + [thioredoxin]-disulfide + H2O = a ribonucleoside 5'-diphosphate + [thioredoxin]-dithiol. Its function is as follows. Ribonucleoside-diphosphate reductase holoenzyme provides the precursors necessary for viral DNA synthesis. Allows virus growth in non-dividing cells. Catalyzes the biosynthesis of deoxyribonucleotides from the corresponding ribonucleotides. This is Ribonucleoside-diphosphate reductase small chain (OPG048) from Bos taurus (Bovine).